Consider the following 348-residue polypeptide: Sulfate/thiosulfate import ATP-binding protein CysA (348 aa).

An ABC transporter domain is found at Ile3–Ile237. Gly35–Thr42 contacts ATP.

Belongs to the ABC transporter superfamily. Sulfate/tungstate importer (TC 3.A.1.6) family. The complex is composed of two ATP-binding proteins (CysA), two transmembrane proteins (CysT and CysW) and a solute-binding protein (CysP).

The protein resides in the cell inner membrane. It carries out the reaction sulfate(out) + ATP + H2O = sulfate(in) + ADP + phosphate + H(+). It catalyses the reaction thiosulfate(out) + ATP + H2O = thiosulfate(in) + ADP + phosphate + H(+). Its function is as follows. Part of the ABC transporter complex CysAWTP involved in sulfate/thiosulfate import. Responsible for energy coupling to the transport system. The protein is Sulfate/thiosulfate import ATP-binding protein CysA of Rhodopseudomonas palustris (strain ATCC BAA-98 / CGA009).